Consider the following 340-residue polypeptide: Deubiquitinase SseL (340 aa).

His-223 is a catalytic residue. The active-site Nucleophile is the Cys-285.

Belongs to the peptidase C79 family.

It is found in the secreted. Its subcellular location is the host cytoplasm. Its function is as follows. Effector proteins function to alter host cell physiology and promote bacterial survival in host tissues. This protease targets the host cell ubiquitin pathway by acting as a deubiquitinase in infected host cells. In Salmonella paratyphi A (strain ATCC 9150 / SARB42), this protein is Deubiquitinase SseL (sseL).